Here is a 302-residue protein sequence, read N- to C-terminus: MLEELNAKEKYSFNKLQKRLRRNVGQAIADFNMIEEGDKVMVCLSGGKDSFAMLDILMSLKASAPIHFDLVAVNLDQKQPGFPEHVLPEYLTTLGIDFKIVEEDTYAIVKEKVPEGKTTCALCSRLRRGILYRTAQELGCTKIALGHHRDDILETLFLNMFYGGKLKSMPPKLVSDDGKNVVIRPLAYCKEKDLVRYAEVKAFPIIPCNLCGSQENLQRQAIKQMMQEWDRRFPGRLETMFTAIQDVIPSHLLDHKLFDFKSINRDSGIIDGGDKAFDPPELPKAPLLDIDEMDMLDVIEVR.

A PP-loop motif motif is present at residues 45–50 (SGGKDS). Positions 120, 123, and 211 each coordinate [4Fe-4S] cluster.

The protein belongs to the TtcA family. As to quaternary structure, homodimer. It depends on Mg(2+) as a cofactor. The cofactor is [4Fe-4S] cluster.

It localises to the cytoplasm. It carries out the reaction cytidine(32) in tRNA + S-sulfanyl-L-cysteinyl-[cysteine desulfurase] + AH2 + ATP = 2-thiocytidine(32) in tRNA + L-cysteinyl-[cysteine desulfurase] + A + AMP + diphosphate + H(+). It participates in tRNA modification. Functionally, catalyzes the ATP-dependent 2-thiolation of cytidine in position 32 of tRNA, to form 2-thiocytidine (s(2)C32). The sulfur atoms are provided by the cysteine/cysteine desulfurase (IscS) system. This chain is tRNA-cytidine(32) 2-sulfurtransferase, found in Aeromonas hydrophila subsp. hydrophila (strain ATCC 7966 / DSM 30187 / BCRC 13018 / CCUG 14551 / JCM 1027 / KCTC 2358 / NCIMB 9240 / NCTC 8049).